The following is a 501-amino-acid chain: Betaine aldehyde dehydrogenase, chloroplastic (501 aa).

Residues 1-7 (MAIRVPS) constitute a chloroplast transit peptide. Position 238–243 (238–243 (GSTATG)) interacts with NAD(+). Glutamate 260 (proton acceptor) is an active-site residue. Cysteine 294 functions as the Nucleophile in the catalytic mechanism.

This sequence belongs to the aldehyde dehydrogenase family. In terms of assembly, homodimer.

It localises to the plastid. The protein localises to the chloroplast. It carries out the reaction betaine aldehyde + NAD(+) + H2O = glycine betaine + NADH + 2 H(+). Its pathway is amine and polyamine biosynthesis; betaine biosynthesis via choline pathway; betaine from betaine aldehyde: step 1/1. This Amaranthus hypochondriacus (Prince-of-Wales feather) protein is Betaine aldehyde dehydrogenase, chloroplastic (BADH4).